Consider the following 198-residue polypeptide: Molybdenum cofactor guanylyltransferase (198 aa).

Residues 14 to 16, Lys-27, Asp-73, and Asp-103 each bind GTP; that span reads LAG. Asp-103 is a binding site for Mg(2+).

The protein belongs to the MobA family. In terms of assembly, monomer. Mg(2+) is required as a cofactor.

The protein localises to the cytoplasm. The enzyme catalyses Mo-molybdopterin + GTP + H(+) = Mo-molybdopterin guanine dinucleotide + diphosphate. In terms of biological role, transfers a GMP moiety from GTP to Mo-molybdopterin (Mo-MPT) cofactor (Moco or molybdenum cofactor) to form Mo-molybdopterin guanine dinucleotide (Mo-MGD) cofactor. The sequence is that of Molybdenum cofactor guanylyltransferase from Pseudomonas aeruginosa (strain ATCC 15692 / DSM 22644 / CIP 104116 / JCM 14847 / LMG 12228 / 1C / PRS 101 / PAO1).